The primary structure comprises 450 residues: C4-dicarboxylate transport protein (450 aa).

8 consecutive transmembrane segments (helical) span residues 25–45 (VVFAIIIGVLLGHFQPEYGAA), 56–76 (LIKMIIAPVIFLTIVTGIASM), 90–110 (MAYFLTFSTLALVVGLVVANV), 162–182 (ILQVLLVAVLFGVSLAMVGDA), 200–220 (LVNIVMKAAPIGAFGAMAFTI), 234–254 (LVLTFYITSAVFVLVVLGAVA), 319–339 (IYMTLAALFIAQATDTHLTLG), and 367–387 (AATLAVVPEVPVAGMALILGV).

Belongs to the dicarboxylate/amino acid:cation symporter (DAACS) (TC 2.A.23) family.

The protein localises to the cell inner membrane. In terms of biological role, responsible for the transport of dicarboxylates such as succinate, fumarate, and malate from the periplasm across the membrane. The chain is C4-dicarboxylate transport protein from Acidovorax sp. (strain JS42).